Here is a 479-residue protein sequence, read N- to C-terminus: ATP synthase subunit beta (479 aa).

168–175 (GGAGVGKT) is a binding site for ATP.

Belongs to the ATPase alpha/beta chains family. In terms of assembly, F-type ATPases have 2 components, CF(1) - the catalytic core - and CF(0) - the membrane proton channel. CF(1) has five subunits: alpha(3), beta(3), gamma(1), delta(1), epsilon(1). CF(0) has three main subunits: a(1), b(2) and c(9-12). The alpha and beta chains form an alternating ring which encloses part of the gamma chain. CF(1) is attached to CF(0) by a central stalk formed by the gamma and epsilon chains, while a peripheral stalk is formed by the delta and b chains.

It is found in the cell membrane. It catalyses the reaction ATP + H2O + 4 H(+)(in) = ADP + phosphate + 5 H(+)(out). Functionally, produces ATP from ADP in the presence of a proton gradient across the membrane. The catalytic sites are hosted primarily by the beta subunits. The sequence is that of ATP synthase subunit beta from Parafrankia sp. (strain EAN1pec).